We begin with the raw amino-acid sequence, 972 residues long: MNNVKSGGRPVAIVAERYVVEKEIGRGSFAVVYKGHLADSSAGNVAIKAVSRSKLRNKKLLENLEIEIAILKKIKHPHIVGLLECERTGTDFYLMMEYCALGDLTFFIKKRRSLMDKHPLVRTLFEKYPPPSEHHNGLNRVLVVNYLQQLSSALKFLRSKNLVHRDIKPQNLLLSTPLVDYNDPAEFHARGFVGIYNLPILKIADFGFARFLPNTSLAETLCGSPLYMAPEILNYQKYNAKADLWSVGTVLYEMCCGKPPFKASNHLELFQKIKKANDVIQFPKHAALESAMVDLICGLLTFEPAKRMGFTEFFSNGLVNEDLSPYEVESEPDLETKSKNVAESNMFISEYLPTAERNKRASPIRLGDSCTLRGPCESPQGADPYPQDNTQSDQHEHLHADYSFQVEMGQDGQQADGEEKRKLYNNQEERSNEERQFGQVSNGRNQEDQLLLHQGRGQIPCEQNRQALQSHSHVAAKQIPDKDSKSSVSCQKHAASAPTKNDHRTTRLKEKTKCSYSDLLLEKEYVVVEKKSVEVNALADEFAQAGSGAPAIRLPDQHHNDASQALQMARHSSTSVSAANTAKQTLLRRNSRTLSSSGASTSRRPSLVDRRLSITSLGATNALSKALGMASLRLFGNSHQQSSNGSSTFKQNPNVTSLLSPQTFQDMTENAVLSADHQWDNSRQADVLHDDSIMKALENLTAKVYAIYSFAEVKFSQIIPLPPSSTQDPYTHKRMSNGSCAIDDEEDDIEHSPGAETYRKNSSGANANTGNYNFSLDTIHEMNLNDLPPNDLYILCTEAIVLYMKSLSLLAYAMHLTSKWWHESADKICPLKLNLLVQWIRERFNECLEKAEFLRMKTQSIQLHNGNQLSASTMVSEPVFVEKLIYDRALDISKTAAKMEMQGEYLEGCEVAYSTSLWMLEALLDDVSDEDNYNDDNLGHTGVLDKSDKEVIKRYIDSIANRLKALRRKLSR.

In terms of domain architecture, Protein kinase spans 18-319 (YVVEKEIGRG…FTEFFSNGLV (302 aa)). Residues 24-32 (IGRGSFAVV) and lysine 48 contribute to the ATP site. The active-site Proton acceptor is aspartate 166. 5 disordered regions span residues 359-394 (KRAS…QSDQ), 424-444 (YNNQ…SNGR), 467-506 (ALQS…HRTT), 562-605 (ASQA…SRRP), and 743-764 (DDEE…NSSG). The segment covering 424-436 (YNNQEERSNEERQ) has biased composition (basic and acidic residues). Positions 562–584 (ASQALQMARHSSTSVSAANTAKQ) are enriched in polar residues. Residues 585–605 (TLLRRNSRTLSSSGASTSRRP) are compositionally biased toward low complexity. Positions 750–759 (EHSPGAETYR) are enriched in basic and acidic residues.

It belongs to the protein kinase superfamily. Ser/Thr protein kinase family. APG1/unc-51/ULK1 subfamily. Homodimer. Forms a ternary complex with ATG13 and ATG17.

It localises to the cytoplasm. The protein resides in the preautophagosomal structure membrane. It carries out the reaction L-seryl-[protein] + ATP = O-phospho-L-seryl-[protein] + ADP + H(+). It catalyses the reaction L-threonyl-[protein] + ATP = O-phospho-L-threonyl-[protein] + ADP + H(+). Serine/threonine protein kinase involved in the cytoplasm to vacuole transport (Cvt) and found to be essential in autophagy, where it is required for the formation of autophagosomes. Involved in the clearance of protein aggregates which cannot be efficiently cleared by the proteasome. Required for selective autophagic degradation of the nucleus (nucleophagy) as well as for mitophagy which contributes to regulate mitochondrial quantity and quality by eliminating the mitochondria to a basal level to fulfill cellular energy requirements and preventing excess ROS production. Also involved in endoplasmic reticulum-specific autophagic process, in selective removal of ER-associated degradation (ERAD) substrates. Plays a key role in ATG9 and ATG23 cycling through the pre-autophagosomal structure and is necessary to promote ATG18 binding to ATG9 through phosphorylation of ATG9. Catalyzes phosphorylation of ATG4, decreasing the interaction between ATG4 and ATG8 and impairing deconjugation of PE-conjugated forms of ATG8. The sequence is that of Serine/threonine-protein kinase ATG1 from Eremothecium gossypii (strain ATCC 10895 / CBS 109.51 / FGSC 9923 / NRRL Y-1056) (Yeast).